Consider the following 1068-residue polypeptide: Integrator complex subunit 3 homolog (1068 aa).

2 disordered regions span residues Y916–S939 and V1001–D1068. 4 positions are modified to phosphoserine: S1038, S1039, S1043, and S1044.

Belongs to the Integrator subunit 3 family. In terms of assembly, belongs to the multiprotein complex Integrator, at least composed of IntS1, IntS2, IntS3, IntS4, omd/IntS5, IntS6, defl/IntS7, IntS8, IntS9, IntS10, IntS11, IntS12, asun/IntS13, IntS14 and IntS15. The core complex associates with protein phosphatase 2A subunits mts/PP2A and Pp2A-29B, to form the Integrator-PP2A (INTAC) complex.

The protein localises to the nucleus. It is found in the cytoplasm. Its function is as follows. Component of the integrator complex, a multiprotein complex that terminates RNA polymerase II (Pol II) transcription in the promoter-proximal region of genes. The integrator complex provides a quality checkpoint during transcription elongation by driving premature transcription termination of transcripts that are unfavorably configured for transcriptional elongation: the complex terminates transcription by (1) catalyzing dephosphorylation of the C-terminal domain (CTD) of Pol II subunit Polr2A/Rbp1 and Spt5, and (2) degrading the exiting nascent RNA transcript via endonuclease activity. The integrator complex is also involved in the 3'-end processing of the U7 snRNA, and also the spliceosomal snRNAs U1, U2, U4 and U5. The chain is Integrator complex subunit 3 homolog (IntS3) from Drosophila sechellia (Fruit fly).